The following is a 171-amino-acid chain: Shikimate kinase (171 aa).

14 to 19 (GAGKST) serves as a coordination point for ATP. S18 lines the Mg(2+) pocket. D36, R60, and G82 together coordinate substrate. ATP is bound at residue R120. R139 contacts substrate. Q156 is a binding site for ATP.

The protein belongs to the shikimate kinase family. As to quaternary structure, monomer. The cofactor is Mg(2+).

The protein localises to the cytoplasm. It catalyses the reaction shikimate + ATP = 3-phosphoshikimate + ADP + H(+). Its pathway is metabolic intermediate biosynthesis; chorismate biosynthesis; chorismate from D-erythrose 4-phosphate and phosphoenolpyruvate: step 5/7. Functionally, catalyzes the specific phosphorylation of the 3-hydroxyl group of shikimic acid using ATP as a cosubstrate. This Shewanella pealeana (strain ATCC 700345 / ANG-SQ1) protein is Shikimate kinase.